Here is a 521-residue protein sequence, read N- to C-terminus: CD166 antigen (521 aa).

Topologically, residues 1 to 465 are extracellular; the sequence is GSPVFIAFRS…NREQVNHRAT (465 aa). N-linked (GlcNAc...) asparagine glycosylation is found at N33, N105, N244, N299, N395, N418, and N437. One can recognise an Ig-like V-type 2 domain in the interval 63–172; that stretch reads PTIVKVFKQP…YGPSGQKTVQ (110 aa). Disulfide bonds link C95–C158, C208–C251, C292–C330, and C373–C423. 3 consecutive Ig-like C2-type domains span residues 183–266, 271–347, and 354–439; these read PTEQ…TAIT, DLSL…ESLT, and PQIK…LNVS. A helical membrane pass occupies residues 466–487; the sequence is LIVGIVLRLLHGALVAGVVYWL. The Cytoplasmic segment spans residues 488-521; the sequence is YVKKSKTASKHVNKDLGNLEENKKLEQNNHRTEA. A disordered region spans residues 500 to 521; it reads NKDLGNLEENKKLEQNNHRTEA. Residues 507 to 521 are compositionally biased toward basic and acidic residues; that stretch reads EENKKLEQNNHRTEA.

In terms of assembly, homodimer. Interacts (via extracellular domain) with CD6 (via extracellular domain). Homodimerization and interaction with CD6 involve the same region and cannot occur simultaneously. The affinity for CD6 is much higher than the affinity for self-association. Interacts (via glycosylated extracellular domain) with LGALS1 and LGALS3. Interaction with LGALS1 or LGALS3 inhibits interaction with CD6. Glycosylated.

Its subcellular location is the cell membrane. The protein resides in the cell projection. The protein localises to the axon. It localises to the dendrite. Cell adhesion molecule that mediates both heterotypic cell-cell contacts via its interaction with CD6, as well as homotypic cell-cell contacts. Promotes T-cell activation and proliferation via its interactions with CD6. Contributes to the formation and maturation of the immunological synapse via its interactions with CD6. Mediates homotypic interactions with cells that express ALCAM. Mediates attachment of dendritic cells onto endothelial cells via homotypic interaction. Inhibits endothelial cell migration and promotes endothelial tube formation via homotypic interactions. Required for normal organization of the lymph vessel network. Required for normal hematopoietic stem cell engraftment in the bone marrow. Plays a role in hematopoiesis; required for normal numbers of hematopoietic stem cells in bone marrow. Promotes in vitro osteoblast proliferation and differentiation. Promotes neurite extension, axon growth and axon guidance; axons grow preferentially on surfaces that contain ALCAM. Mediates outgrowth and pathfinding for retinal ganglion cell axons. The chain is CD166 antigen (ALCAM) from Canis lupus familiaris (Dog).